A 117-amino-acid chain; its full sequence is uncharacterized protein (117 aa).

An N-terminal signal peptide occupies residues 1–22; the sequence is MHVKYLAGIVGAALLMAGCSSS.

This is an uncharacterized protein from Escherichia coli O6:H1 (strain CFT073 / ATCC 700928 / UPEC).